The chain runs to 150 residues: UPF0506 protein SJCHGC02380 (150 aa).

The N-terminal stretch at 1–18 is a signal peptide; sequence MNTCIQLLILCLVTVINS. Residues Asn-20, Asn-24, Asn-36, Asn-48, Asn-52, and Asn-110 are each glycosylated (N-linked (GlcNAc...) asparagine). Disulfide bonds link Cys-116–Cys-130, Cys-123–Cys-134, and Cys-129–Cys-139.

Belongs to the UPF0506 family.

Its subcellular location is the secreted. In Schistosoma japonicum (Blood fluke), this protein is UPF0506 protein SJCHGC02380.